A 397-amino-acid polypeptide reads, in one-letter code: Succinate--CoA ligase [ADP-forming] subunit beta (397 aa).

An ATP-grasp domain is found at 9 to 254; that stretch reads KALLKGYGAP…ETEEDAKEIE (246 aa). Residues Lys46, 53-55, Glu109, Ala112, and Glu117 contribute to the ATP site; that span reads GRG. The Mg(2+) site is built by Asn209 and Asp223. Substrate-binding positions include Asn274 and 331-333; that span reads GIM.

The protein belongs to the succinate/malate CoA ligase beta subunit family. As to quaternary structure, heterotetramer of two alpha and two beta subunits. Mg(2+) serves as cofactor.

It carries out the reaction succinate + ATP + CoA = succinyl-CoA + ADP + phosphate. The catalysed reaction is GTP + succinate + CoA = succinyl-CoA + GDP + phosphate. It functions in the pathway carbohydrate metabolism; tricarboxylic acid cycle; succinate from succinyl-CoA (ligase route): step 1/1. Succinyl-CoA synthetase functions in the citric acid cycle (TCA), coupling the hydrolysis of succinyl-CoA to the synthesis of either ATP or GTP and thus represents the only step of substrate-level phosphorylation in the TCA. The beta subunit provides nucleotide specificity of the enzyme and binds the substrate succinate, while the binding sites for coenzyme A and phosphate are found in the alpha subunit. This Rhizobium etli (strain CIAT 652) protein is Succinate--CoA ligase [ADP-forming] subunit beta.